We begin with the raw amino-acid sequence, 514 residues long: Peptide chain release factor 3 (514 aa).

In terms of domain architecture, tr-type G spans 8–268 (KKRRTFAIIS…IFLKFAPEPH (261 aa)). Residues 17–24 (SHPDAGKT), 85–89 (DTPGH), and 139–142 (NKLD) each bind GTP.

It belongs to the TRAFAC class translation factor GTPase superfamily. Classic translation factor GTPase family. PrfC subfamily.

The protein localises to the cytoplasm. Its function is as follows. Increases the formation of ribosomal termination complexes and stimulates activities of RF-1 and RF-2. It binds guanine nucleotides and has strong preference for UGA stop codons. It may interact directly with the ribosome. The stimulation of RF-1 and RF-2 is significantly reduced by GTP and GDP, but not by GMP. The protein is Peptide chain release factor 3 of Streptococcus pneumoniae serotype 2 (strain D39 / NCTC 7466).